The chain runs to 432 residues: Teosinte glume architecture 1 (432 aa).

2 disordered regions span residues 20-55 (HAAA…GAPA) and 68-102 (ECEP…QQQC). Residues 22–41 (AAAPSSGGHAANAAAAGTGT) are compositionally biased toward low complexity. An SBP-type zinc finger spans residues 102–179 (CPSCAVDGCR…DGHNRRRRKP (78 aa)). Cys-105, Cys-110, Cys-127, His-130, Cys-146, Cys-149, His-153, and Cys-165 together coordinate Zn(2+). Positions 409–420 (GGGSGGGEGSSD) are enriched in gly residues. The interval 409–432 (GGGSGGGEGSSDGGTSSSMPFSWQ) is disordered.

In terms of assembly, monomer and homodimer. Strongly expressed in immature ears and weakly in husks. Found in the inflorescence meristem of the developing ear, in the spikelet pair primordia, the glume primordia, the cupule forming region and other floral organs. Not detected in other tissues.

In terms of biological role, SBP transcriptional regulator probably involved in the domestication of maize. Acts as a transcriptional repressor binding to a 5'-GTAC-3' motif. May repress the growth of lateral branches in length and numbers. The protein is Teosinte glume architecture 1 of Zea mays (Maize).